Consider the following 314-residue polypeptide: NADH-ubiquinone oxidoreductase chain 1 (314 aa).

8 consecutive transmembrane segments (helical) span residues 5–25, 78–98, 105–125, 151–171, 176–196, 227–247, 251–271, and 294–314; these read IMPL…VAFL, FSPI…PYLI, LGVL…MIAG, LALI…LNFY, YIWF…SCLA, LIFL…VVIF, DIYS…FIWV, and LSLN…SLLF.

The protein belongs to the complex I subunit 1 family.

The protein localises to the mitochondrion inner membrane. It catalyses the reaction a ubiquinone + NADH + 5 H(+)(in) = a ubiquinol + NAD(+) + 4 H(+)(out). In terms of biological role, core subunit of the mitochondrial membrane respiratory chain NADH dehydrogenase (Complex I) that is believed to belong to the minimal assembly required for catalysis. Complex I functions in the transfer of electrons from NADH to the respiratory chain. The immediate electron acceptor for the enzyme is believed to be ubiquinone. The chain is NADH-ubiquinone oxidoreductase chain 1 (ND1) from Anopheles quadrimaculatus (Common malaria mosquito).